The primary structure comprises 246 residues: Fasciclin-like arabinogalactan protein 11 (246 aa).

The first 24 residues, 1–24, serve as a signal peptide directing secretion; sequence MATSRTFIFSNLFIFFLVIATTYG. Positions 34-179 constitute an FAS1 domain; the sequence is PTNITAILEK…LAVYQVDQVL (146 aa). N-linked (GlcNAc...) asparagine glycosylation is found at N36, N68, N141, and N150. The tract at residues 193–222 is disordered; that stretch reads PAPEKGGSVSKGSASGGDDGGDSTDSSDAE. S219 carries the GPI-anchor amidated serine lipid modification. Positions 220–246 are cleaved as a propeptide — removed in mature form; it reads DAERTGFGFGIRITTVAAIAASSSLWI.

It belongs to the fasciclin-like AGP family. As to expression, expressed in the sclerenchyma cells of inflorescence stems and siliques.

Its subcellular location is the cell membrane. Functionally, may be a cell surface adhesion protein. The polypeptide is Fasciclin-like arabinogalactan protein 11 (FLA11) (Arabidopsis thaliana (Mouse-ear cress)).